Reading from the N-terminus, the 391-residue chain is MNYKTVDVILERALLGDDISPQEGVVLLTQTDSGAIASIRATADKLRQQQAGDTVTYVINRNINFTNICEQHCSFCAFRRDDGDADAYWLDWAGIREKSHDAVQRGATEICMQGGLHPQAQIDGKSLPYYLKLVETIKQEYPQIHLHAFSPQEVQFIARVDGLEYVDVISALQNAGVNSLPGTAAEVLDDEVRRILCPEKINTATWLEIIGTAHKVGLHTTSTILSGHIETPEQKIGHLEKLRSLQQTAINHKYPARITEFIVLPFVGQEAPKSLRRRVGRDQPILADALLLGAVARIYLGNWIPNHQPSWVKLGLAGATEALTWGCNDIGGTLMEEHITTMAGAVGGTCMEVATLQNAIASIGRPYQQRDTLYHKVDAAKKLANTVMSNG.

One can recognise a Radical SAM core domain in the interval 55-302 (VTYVINRNIN…GAVARIYLGN (248 aa)). [4Fe-4S] cluster-binding residues include Cys69, Cys73, and Cys76.

Belongs to the radical SAM superfamily. CofH family. As to quaternary structure, consists of two subunits, CofG and CofH. [4Fe-4S] cluster is required as a cofactor.

The catalysed reaction is 5-amino-6-(D-ribitylamino)uracil + L-tyrosine + S-adenosyl-L-methionine = 5-amino-5-(4-hydroxybenzyl)-6-(D-ribitylimino)-5,6-dihydrouracil + 2-iminoacetate + 5'-deoxyadenosine + L-methionine + H(+). Its pathway is cofactor biosynthesis; coenzyme F0 biosynthesis. Catalyzes the radical-mediated synthesis of 5-amino-5-(4-hydroxybenzyl)-6-(D-ribitylimino)-5,6-dihydrouracil from 5-amino-6-(D-ribitylamino)uracil and L-tyrosine. This Nostoc sp. (strain PCC 7120 / SAG 25.82 / UTEX 2576) protein is 5-amino-6-(D-ribitylamino)uracil--L-tyrosine 4-hydroxyphenyl transferase.